The primary structure comprises 300 residues: NAD kinase (300 aa).

Residue Asp-75 is the Proton acceptor of the active site. NAD(+) is bound by residues 75-76 (DG), 149-150 (ND), Arg-177, Asp-179, 190-195 (TAYALS), Ala-214, and Gln-248.

Belongs to the NAD kinase family. A divalent metal cation is required as a cofactor.

Its subcellular location is the cytoplasm. It carries out the reaction NAD(+) + ATP = ADP + NADP(+) + H(+). Functionally, involved in the regulation of the intracellular balance of NAD and NADP, and is a key enzyme in the biosynthesis of NADP. Catalyzes specifically the phosphorylation on 2'-hydroxyl of the adenosine moiety of NAD to yield NADP. This is NAD kinase from Burkholderia cenocepacia (strain HI2424).